A 364-amino-acid polypeptide reads, in one-letter code: Thebaine 6-O-demethylase (364 aa).

The Fe2OG dioxygenase domain occupies 214-314 (GTQAMRMNYY…RLSIATFHDP (101 aa)). 2-oxoglutarate is bound at residue Tyr223. Fe cation is bound by residues His238, Asp240, and His295. Positions 305 and 307 each coordinate 2-oxoglutarate.

This sequence belongs to the iron/ascorbate-dependent oxidoreductase family. Requires L-ascorbate as cofactor. It depends on Fe cation as a cofactor. In terms of tissue distribution, mainly expressed in stems and leaves and, to a lower extent, in capsules and roots.

The catalysed reaction is thebaine + 2-oxoglutarate + O2 = neopinone + formaldehyde + succinate + CO2. It carries out the reaction oripavine + 2-oxoglutarate + O2 = neomorphinone + formaldehyde + succinate + CO2. It catalyses the reaction (S)-canadine + S-adenosyl-L-methionine = (S)-cis-N-methylcanadine + S-adenosyl-L-homocysteine. The enzyme catalyses thebaine + 2-oxoglutarate + O2 = 6-O-demethylthebaine + formaldehyde + succinate + CO2 + H(+). It participates in alkaloid biosynthesis; morphine biosynthesis. Its activity is regulated as follows. Moderate substrate inhibition. Not inhibited in vitro by acylcyclohexanediones. Non-heme dioxygenase involved in biosynthesis of morphinan-type benzylisoquinoline and opiate alkaloids natural products. Mediates the conversion of thebaine to neopinone. Also catalyzes, with lower efficiency, the 6-O-demethylation of oripavine to neomorphinone, which is converted spontaneously to morphinone. Supports dealkylation reactions such as O,O-demethylenation in the metabolism of protopine, benzo[c]phenanthridine, and rhoeadine alkaloids; cleaves a methylenedioxy bridge leaving two hydroxyl groups. Catalyzes the O-demethylation of methylenedioxy bridges on protopine alkaloids such as allocryptopine. No activity with (S)-reticuline, salutaridine, papaverine, (S)-corytuberine, (S)-scoulerine, pavine, noscapine or codeine. This chain is Thebaine 6-O-demethylase, found in Papaver somniferum (Opium poppy).